The primary structure comprises 271 residues: Hydroxyethylthiazole kinase (271 aa).

Met45 lines the substrate pocket. ATP is bound by residues Arg121 and Thr168. Residue Gly195 participates in substrate binding.

It belongs to the Thz kinase family. Mg(2+) is required as a cofactor.

The enzyme catalyses 5-(2-hydroxyethyl)-4-methylthiazole + ATP = 4-methyl-5-(2-phosphooxyethyl)-thiazole + ADP + H(+). It participates in cofactor biosynthesis; thiamine diphosphate biosynthesis; 4-methyl-5-(2-phosphoethyl)-thiazole from 5-(2-hydroxyethyl)-4-methylthiazole: step 1/1. Functionally, catalyzes the phosphorylation of the hydroxyl group of 4-methyl-5-beta-hydroxyethylthiazole (THZ). The protein is Hydroxyethylthiazole kinase of Bacillus pumilus (strain SAFR-032).